A 132-amino-acid chain; its full sequence is Small ribosomal subunit protein uS8 (132 aa).

It belongs to the universal ribosomal protein uS8 family. In terms of assembly, part of the 30S ribosomal subunit. Contacts proteins S5 and S12.

One of the primary rRNA binding proteins, it binds directly to 16S rRNA central domain where it helps coordinate assembly of the platform of the 30S subunit. The chain is Small ribosomal subunit protein uS8 from Ehrlichia chaffeensis (strain ATCC CRL-10679 / Arkansas).